A 919-amino-acid polypeptide reads, in one-letter code: Alpha-amylase (919 aa).

A signal peptide spans 1-33 (MPATRRTARVRRVAAVTVTALAAALLPPLAARA). 2 residues coordinate Ca(2+): N182 and D281. D312 serves as the catalytic Nucleophile. Residue H316 coordinates Ca(2+). E346 (proton donor) is an active-site residue. The segment at 704 to 729 (ASGRLHHRHPARRGGAHRRLPGPRGR) is disordered. Positions 707-724 (RLHHRHPARRGGAHRRLP) are enriched in basic residues.

The protein belongs to the glycosyl hydrolase 13 family. As to quaternary structure, monomer. Requires Ca(2+) as cofactor.

Its subcellular location is the secreted. It carries out the reaction Endohydrolysis of (1-&gt;4)-alpha-D-glucosidic linkages in polysaccharides containing three or more (1-&gt;4)-alpha-linked D-glucose units.. This chain is Alpha-amylase (amy), found in Streptomyces lividans.